The primary structure comprises 350 residues: 3-dehydroquinate synthase (350 aa).

NAD(+) contacts are provided by residues glycine 106–aspartate 110, threonine 130–serine 131, lysine 143, and lysine 152. Zn(2+) is bound by residues glutamate 185, histidine 246, and histidine 263.

This sequence belongs to the sugar phosphate cyclases superfamily. Dehydroquinate synthase family. Requires Co(2+) as cofactor. Zn(2+) is required as a cofactor. It depends on NAD(+) as a cofactor.

It is found in the cytoplasm. The enzyme catalyses 7-phospho-2-dehydro-3-deoxy-D-arabino-heptonate = 3-dehydroquinate + phosphate. It functions in the pathway metabolic intermediate biosynthesis; chorismate biosynthesis; chorismate from D-erythrose 4-phosphate and phosphoenolpyruvate: step 2/7. Its function is as follows. Catalyzes the conversion of 3-deoxy-D-arabino-heptulosonate 7-phosphate (DAHP) to dehydroquinate (DHQ). The sequence is that of 3-dehydroquinate synthase from Clostridium botulinum (strain Alaska E43 / Type E3).